The chain runs to 143 residues: Large ribosomal subunit protein uL11 (143 aa).

Belongs to the universal ribosomal protein uL11 family. As to quaternary structure, part of the ribosomal stalk of the 50S ribosomal subunit. Interacts with L10 and the large rRNA to form the base of the stalk. L10 forms an elongated spine to which L12 dimers bind in a sequential fashion forming a multimeric L10(L12)X complex. In terms of processing, one or more lysine residues are methylated.

Functionally, forms part of the ribosomal stalk which helps the ribosome interact with GTP-bound translation factors. The sequence is that of Large ribosomal subunit protein uL11 from Methylococcus capsulatus (strain ATCC 33009 / NCIMB 11132 / Bath).